The following is a 651-amino-acid chain: Transcription factor E2-alpha (651 aa).

Disordered stretches follow at residues 32-107, 131-208, and 341-378; these read ANGK…SERN, LSLS…KTPS, and DHSS…ALSP. Composition is skewed to low complexity over residues 56-73, 131-148, and 341-354; these read SSGS…FDPS, LSLS…KSSS, and DHSS…PSTP. Phosphoserine is present on residues Ser-135 and Ser-140. Thr-353 bears the Phosphothreonine mark. Ser-357 bears the Phosphoserine mark. Residue Arg-369 is modified to Omega-N-methylarginine. Phosphoserine is present on Ser-377. The tract at residues 387 to 422 is leucine-zipper; it reads LSKMEDRLDEAIHVLRSHAVGTASDLHGLLPGHGAL. Positions 457 to 549 are disordered; that stretch reads HNHASLPSQP…KAEREKERRV (93 aa). Over residues 461–479 the composition is skewed to low complexity; the sequence is SLPSQPSSLPDLSQRPPDS. Residue Lys-496 forms a Glycyl lysine isopeptide (Lys-Gly) (interchain with G-Cter in SUMO2) linkage. A Phosphoserine modification is found at Ser-526. Asp-528 bears the Phosphothreonine mark. Residue Asp-533 is modified to Phosphoserine. Over residues 539 to 549 the composition is skewed to basic and acidic residues; that stretch reads QKAEREKERRV. A bHLH domain is found at 546–599; that stretch reads ERRVANNARERLRVRDINEAFKELGRMCQLHLSSEKPQTKLLILHQAVAVILSL. Lys-622 participates in a covalent cross-link: Glycyl lysine isopeptide (Lys-Gly) (interchain with G-Cter in SUMO2).

In terms of assembly, homodimer. Heterodimer; efficient DNA binding requires dimerization with another bHLH protein. Forms a heterodimer with TWIST1 and TWIST2. Forms a heterodimer with NEUROD1; the heterodimer is inhibited in presence of ID2, but not NR0B2, to E-box element. Forms a heterodimer with TCF15; the heterodimer binds E-box element. Forms a heterodimer with MYOG; heterodimerization enhances MYOG DNA-binding and transcriptional activities. Forms a heterodimer with ATOH8; repress transcription of TCF3 and TCF3-NEUROG3 dimer-induced transactivation of E box-dependent promoters. Component of a nuclear TAL-1 complex composed at least of CBFA2T3, LDB1, TAL1 and TCF3. Interacts with NEUROD2. Interacts with EP300. Interacts with PTF1A, TGFB1I1 and UBE2I. Interacts with BHLHA9. Interacts with ASB2; the interaction is mediated by SKP2 and targets TCF3 for Notch-induced proteasomal degradation. Interacts with transcription factor ASCL5/AmeloD. As to quaternary structure, forms a heterodimer with ATOH7; required for ATOH7 DNA-binding. Interacts with RALGAPA1. Interacts with FIGLA. In terms of processing, phosphorylated following NGF stimulation. Post-translationally, undergoes Notch-induced ubiquitination and subsequent proteasomal degradation which is mediated by ASB1 or ASB2, the substrate-recognition components of probable ECS E3 ubiquitin-protein ligase complexes.

Its subcellular location is the nucleus. Functionally, transcriptional regulator involved in the initiation of neuronal differentiation and mesenchymal to epithelial transition. Heterodimers between TCF3 and tissue-specific basic helix-loop-helix (bHLH) proteins play major roles in determining tissue-specific cell fate during embryogenesis, like muscle or early B-cell differentiation. Together with TCF15, required for the mesenchymal to epithelial transition. Dimers bind DNA on E-box motifs: 5'-CANNTG-3'. Binds to the kappa-E2 site in the kappa immunoglobulin gene enhancer. Binds to IEB1 and IEB2, which are short DNA sequences in the insulin gene transcription control region. In terms of biological role, facilitates ATOH7 binding to DNA at the consensus sequence 5'-CAGGTG-3', and positively regulates transcriptional activity. The chain is Transcription factor E2-alpha (Tcf3) from Mus musculus (Mouse).